The following is a 488-amino-acid chain: Glutamate--tRNA ligase (488 aa).

The 'HIGH' region signature appears at 16–26 (PSPTGEPHVGT). The 'KMSKS' region signature appears at 257–261 (KLSKR). Lys-260 contributes to the ATP binding site.

It belongs to the class-I aminoacyl-tRNA synthetase family. Glutamate--tRNA ligase type 1 subfamily. As to quaternary structure, monomer.

It is found in the cytoplasm. The enzyme catalyses tRNA(Glu) + L-glutamate + ATP = L-glutamyl-tRNA(Glu) + AMP + diphosphate. Catalyzes the attachment of glutamate to tRNA(Glu) in a two-step reaction: glutamate is first activated by ATP to form Glu-AMP and then transferred to the acceptor end of tRNA(Glu). This chain is Glutamate--tRNA ligase, found in Rhizobium johnstonii (strain DSM 114642 / LMG 32736 / 3841) (Rhizobium leguminosarum bv. viciae).